We begin with the raw amino-acid sequence, 423 residues long: Carboxypeptidase B2 (423 aa).

The first 22 residues, 1–22, serve as a signal peptide directing secretion; the sequence is MKLCSLAVLVPIVLFCEQHVFA. A propeptide spans 23-114 (activation peptide); that stretch reads FQSGQVLAAL…QISNDTVSPR (92 aa). N-linked (GlcNAc...) asparagine glycosylation is found at Asn-44, Asn-73, and Asn-85. Residue Asn-108 is glycosylated (N-linked (GlcNAc...) (complex) asparagine). The region spanning 122–419 is the Peptidase M14 domain; the sequence is QYHSLNEIYS…AAVSKIAWHV (298 aa). Cys-178 and Cys-191 are disulfide-bonded. The Zn(2+) site is built by His-181 and Glu-184. Substrate contacts are provided by residues 181 to 184 and Arg-239; that span reads HARE. N-linked (GlcNAc...) asparagine; partial glycosylation is present at Asn-241. Disulfide bonds link Cys-250/Cys-274 and Cys-265/Cys-279. 256–257 is a binding site for substrate; that stretch reads NR. Residue His-310 participates in Zn(2+) binding. Substrate contacts are provided by residues 311–312 and Tyr-363; that span reads SY. Glu-385 (proton donor/acceptor) is an active-site residue.

Belongs to the peptidase M14 family. It depends on Zn(2+) as a cofactor. In terms of processing, N-glycosylated. N-glycan at Asn-108: Hex5HexNAc4. In terms of tissue distribution, plasma; synthesized in the liver.

Its subcellular location is the secreted. It catalyses the reaction Release of C-terminal Arg and Lys from a polypeptide.. Its activity is regulated as follows. TAFI/CPB2 is unique among carboxypeptidases in that it spontaneously inactivates with a short half-life, a property that is crucial for its role in controlling blood clot lysis. The zymogen is stabilized by interactions with the activation peptide. Release of the activation peptide increases a dynamic flap mobility and in time this leads to conformational changes that disrupt the catalytic site and expose a cryptic thrombin-cleavage site present at Arg-324. In terms of biological role, cleaves C-terminal arginine or lysine residues from biologically active peptides such as kinins or anaphylatoxins in the circulation thereby regulating their activities. Down-regulates fibrinolysis by removing C-terminal lysine residues from fibrin that has already been partially degraded by plasmin. The polypeptide is Carboxypeptidase B2 (CPB2) (Homo sapiens (Human)).